A 226-amino-acid chain; its full sequence is Protein GrpE (226 aa).

Disordered stretches follow at residues 1-31 and 189-226; these read MTPNDTENAARPLPEGAVDPAQDAAGAPDTL and VSKGGPKAAEASKPAGEAPKPAGEAPKPAGDGQKPAEA. Residues 192–218 are compositionally biased toward low complexity; that stretch reads GGPKAAEASKPAGEAPKPAGEAPKPAG.

This sequence belongs to the GrpE family. Homodimer.

It localises to the cytoplasm. Participates actively in the response to hyperosmotic and heat shock by preventing the aggregation of stress-denatured proteins, in association with DnaK and GrpE. It is the nucleotide exchange factor for DnaK and may function as a thermosensor. Unfolded proteins bind initially to DnaJ; upon interaction with the DnaJ-bound protein, DnaK hydrolyzes its bound ATP, resulting in the formation of a stable complex. GrpE releases ADP from DnaK; ATP binding to DnaK triggers the release of the substrate protein, thus completing the reaction cycle. Several rounds of ATP-dependent interactions between DnaJ, DnaK and GrpE are required for fully efficient folding. The protein is Protein GrpE of Methylobacterium nodulans (strain LMG 21967 / CNCM I-2342 / ORS 2060).